The following is a 146-amino-acid chain: MAPSSNKVGKAIQAKKAVVKGSKTNVRKNVRTSVHFRRPKTLVTARAPRYARKSAPARDKLDSFAVIKAPHTTESSMKKIEDHNTLVFIVDEKANKHHIKRAVHALYNVKAVKVNTLITPLQQKKAYVRLASDYDALDVANKIGFI.

The disordered stretch occupies residues 1–22 (MAPSSNKVGKAIQAKKAVVKGS).

It belongs to the universal ribosomal protein uL23 family.

Its function is as follows. This protein binds to a specific region on the 26S rRNA. The sequence is that of Large ribosomal subunit protein uL23B (rpl-23A.2) from Caenorhabditis elegans.